We begin with the raw amino-acid sequence, 404 residues long: Cysteine desulfurase IscS (404 aa).

Pyridoxal 5'-phosphate-binding positions include alanine 75–threonine 76, asparagine 155, glutamine 183, and serine 203–histidine 205. Lysine 206 carries the post-translational modification N6-(pyridoxal phosphate)lysine. Threonine 243 serves as a coordination point for pyridoxal 5'-phosphate. Cysteine 328 functions as the Cysteine persulfide intermediate in the catalytic mechanism. [2Fe-2S] cluster is bound at residue cysteine 328.

The protein belongs to the class-V pyridoxal-phosphate-dependent aminotransferase family. NifS/IscS subfamily. In terms of assembly, homodimer. Forms a heterotetramer with IscU, interacts with other sulfur acceptors. Pyridoxal 5'-phosphate serves as cofactor.

The protein localises to the cytoplasm. It carries out the reaction (sulfur carrier)-H + L-cysteine = (sulfur carrier)-SH + L-alanine. The protein operates within cofactor biosynthesis; iron-sulfur cluster biosynthesis. Functionally, master enzyme that delivers sulfur to a number of partners involved in Fe-S cluster assembly, tRNA modification or cofactor biosynthesis. Catalyzes the removal of elemental sulfur atoms from cysteine to produce alanine. Functions as a sulfur delivery protein for Fe-S cluster synthesis onto IscU, an Fe-S scaffold assembly protein, as well as other S acceptor proteins. The sequence is that of Cysteine desulfurase IscS from Shewanella baltica (strain OS185).